Consider the following 568-residue polypeptide: Sulfite reductase [NADPH] hemoprotein beta-component (568 aa).

Positions 425, 431, 470, and 474 each coordinate [4Fe-4S] cluster. Residue C474 participates in siroheme binding.

Belongs to the nitrite and sulfite reductase 4Fe-4S domain family. As to quaternary structure, alpha(8)-beta(8). The alpha component is a flavoprotein, the beta component is a hemoprotein. It depends on siroheme as a cofactor. The cofactor is [4Fe-4S] cluster.

It catalyses the reaction hydrogen sulfide + 3 NADP(+) + 3 H2O = sulfite + 3 NADPH + 4 H(+). Its pathway is sulfur metabolism; hydrogen sulfide biosynthesis; hydrogen sulfide from sulfite (NADPH route): step 1/1. In terms of biological role, component of the sulfite reductase complex that catalyzes the 6-electron reduction of sulfite to sulfide. This is one of several activities required for the biosynthesis of L-cysteine from sulfate. This Xanthomonas campestris pv. campestris (strain B100) protein is Sulfite reductase [NADPH] hemoprotein beta-component.